The primary structure comprises 100 residues: Serine protease inhibitor 1 protein (100 aa).

An N-terminal signal peptide occupies residues 1–20; the sequence is MKHLLIVSLVFVTIIWKIEC. 5 disulfides stabilise this stretch: Cys42–Cys74, Cys51–Cys69, Cys54–Cys65, Cys58–Cys93, and Cys76–Cys90. A TIL domain is found at 42-93; that stretch reads CGLNEVWMVCSSCEEECGKTPQPCPRICQPARCQCPAHKGYRRDGQGNCIFC.

The protein resides in the secreted. The sequence is that of Serine protease inhibitor 1 protein from Caenorhabditis elegans.